Consider the following 315-residue polypeptide: Mycothiol acetyltransferase (315 aa).

N-acetyltransferase domains lie at 4–141 (LDWR…RPLR) and 152–315 (VVIR…GTDN). Glu-36 serves as a coordination point for 1D-myo-inositol 2-(L-cysteinylamino)-2-deoxy-alpha-D-glucopyranoside. Residues 80–82 (LVV) and 88–93 (RRGIGT) each bind acetyl-CoA. Glu-179, Lys-224, and Glu-234 together coordinate 1D-myo-inositol 2-(L-cysteinylamino)-2-deoxy-alpha-D-glucopyranoside. Acetyl-CoA is bound by residues 238 to 240 (LGV) and 245 to 251 (QRRGLGQ). Tyr-282 lines the 1D-myo-inositol 2-(L-cysteinylamino)-2-deoxy-alpha-D-glucopyranoside pocket. An acetyl-CoA-binding site is contributed by 287-292 (NVAAVR).

The protein belongs to the acetyltransferase family. MshD subfamily. Monomer.

The enzyme catalyses 1D-myo-inositol 2-(L-cysteinylamino)-2-deoxy-alpha-D-glucopyranoside + acetyl-CoA = mycothiol + CoA + H(+). Catalyzes the transfer of acetyl from acetyl-CoA to desacetylmycothiol (Cys-GlcN-Ins) to form mycothiol. The polypeptide is Mycothiol acetyltransferase (Mycobacterium bovis (strain ATCC BAA-935 / AF2122/97)).